The chain runs to 69 residues: Conotoxin reg3f (69 aa).

Positions Met-1–Ala-20 are cleaved as a signal peptide. Positions Leu-21–Arg-52 are excised as a propeptide. 3 disulfide bridges follow: Cys-54–Cys-68, Cys-55–Cys-66, and Cys-60–Cys-69. Cys-69 is modified (cysteine amide).

As to expression, expressed by the venom duct.

It localises to the secreted. In Conus regius (Crown cone), this protein is Conotoxin reg3f.